A 338-amino-acid polypeptide reads, in one-letter code: Cell division protein ZipA (338 aa).

Residues 1-2 (MS) lie on the Periplasmic side of the membrane. A helical transmembrane segment spans residues 3–23 (LREWLIAIGTLVIIGIVIDGV). Topologically, residues 24-338 (RRMRRARKES…FERKQRSQRA (315 aa)) are cytoplasmic. Residues 33–192 (SMAISSGMGA…RKNQPLAGAN (160 aa)) are disordered. Basic and acidic residues-rich tracts occupy residues 70–81 (TLEDRGYLKRDM) and 138–162 (EVDRSKTRPSVPEKAKAEPEPRAEE).

Belongs to the ZipA family. As to quaternary structure, interacts with FtsZ via their C-terminal domains.

The protein resides in the cell inner membrane. In terms of biological role, essential cell division protein that stabilizes the FtsZ protofilaments by cross-linking them and that serves as a cytoplasmic membrane anchor for the Z ring. Also required for the recruitment to the septal ring of downstream cell division proteins. The protein is Cell division protein ZipA of Marinobacter nauticus (strain ATCC 700491 / DSM 11845 / VT8) (Marinobacter aquaeolei).